Here is a 439-residue protein sequence, read N- to C-terminus: Xaa-Pro dipeptidase (439 aa).

Mn(2+)-binding residues include Asp244, Asp255, His335, Glu380, and Glu419.

The protein belongs to the peptidase M24B family. Bacterial-type prolidase subfamily. Mn(2+) is required as a cofactor.

The catalysed reaction is Xaa-L-Pro dipeptide + H2O = an L-alpha-amino acid + L-proline. Functionally, splits dipeptides with a prolyl residue in the C-terminal position. This is Xaa-Pro dipeptidase from Shewanella sediminis (strain HAW-EB3).